Reading from the N-terminus, the 312-residue chain is HPr kinase/phosphorylase (312 aa).

Active-site residues include His141 and Lys162. 156–163 contacts ATP; sequence GDSGIGKS. Ser163 provides a ligand contact to Mg(2+). The active-site Proton acceptor; for phosphorylation activity. Proton donor; for dephosphorylation activity is the Asp180. The tract at residues 204–213 is important for the catalytic mechanism of both phosphorylation and dephosphorylation; the sequence is LEIRGVGIID. Residue Glu205 coordinates Mg(2+). The active site involves Arg246. Residues 267–272 form an important for the catalytic mechanism of dephosphorylation region; that stretch reads PVRVGR.

It belongs to the HPrK/P family. In terms of assembly, homohexamer. The cofactor is Mg(2+).

The enzyme catalyses [HPr protein]-L-serine + ATP = [HPr protein]-O-phospho-L-serine + ADP + H(+). The catalysed reaction is [HPr protein]-O-phospho-L-serine + phosphate + H(+) = [HPr protein]-L-serine + diphosphate. Its function is as follows. Catalyzes the ATP- as well as the pyrophosphate-dependent phosphorylation of a specific serine residue in HPr, a phosphocarrier protein of the phosphoenolpyruvate-dependent sugar phosphotransferase system (PTS). HprK/P also catalyzes the pyrophosphate-producing, inorganic phosphate-dependent dephosphorylation (phosphorolysis) of seryl-phosphorylated HPr (P-Ser-HPr). The two antagonistic activities of HprK/P are regulated by several intracellular metabolites, which change their concentration in response to the absence or presence of rapidly metabolisable carbon sources (glucose, fructose, etc.) in the growth medium. Therefore, by controlling the phosphorylation state of HPr, HPrK/P is a sensor enzyme that plays a major role in the regulation of carbon metabolism and sugar transport: it mediates carbon catabolite repression (CCR), and regulates PTS-catalyzed carbohydrate uptake and inducer exclusion. This Pediococcus pentosaceus (strain ATCC 25745 / CCUG 21536 / LMG 10740 / 183-1w) protein is HPr kinase/phosphorylase.